A 272-amino-acid polypeptide reads, in one-letter code: Replication-associated protein A (272 aa).

In terms of domain architecture, CRESS-DNA virus Rep endonuclease spans 11–114 (SHRSPNTFLT…PLALFERGTF (104 aa)). Residues 18 to 21 (FLTY) carry the RCR-1 motif. Positions 52 and 62 each coordinate a divalent metal cation. An RCR-2 motif is present at residues 60-65 (CLHALI). The active-site For DNA cleavage activity is tyrosine 100. An RCR-3 motif is present at residues 100-103 (YITK). Residue glutamate 104 participates in a divalent metal cation binding. Residues 175-187 (SANKLFPDIQEEF) are oligomerization. An LXCXE motif, interaction with host RBR1 motif is present at residues 198 to 202 (LLCNE). The interval 221-230 (LLLQPNCYSI) is transactivation. A compositionally biased stretch (polar residues) spans 251–265 (QGSAASTSSVQQGQE). Residues 251–272 (QGSAASTSSVQQGQENLHGPEA) form a disordered region.

This sequence belongs to the geminiviridae Rep protein family. Homooligomer. Interacts (via LXCXE domain) with host retinoblastoma-related protein 1 (RBR1), and may thereby deregulate the host cell cycle. Part of the C- and V-complexes which are RepA-Rep-DNA complexes involved in the c-sense and v-sense transcription.

The protein resides in the host nucleus. It localises to the host cytoplasm. Implicated in enhancement of V-sense gene expression. Acts a an inhibitor of C-sense gene transcription. The protein is Replication-associated protein A of Avena sativa (Oat).